The sequence spans 581 residues: Metal transporter Nramp7.1 (581 aa).

N-linked (GlcNAc...) asparagine glycosylation is found at N11 and N19. Transmembrane regions (helical) follow at residues 57–77 (FLSY…PGNL), 90–110 (ELLW…SLAA), 146–166 (YCLW…EGII), 181–201 (LLIG…WVGV), 224–244 (LLIA…MSYV), 270–290 (IALL…ALVL), and 307–327 (YFLI…LAVI). The N-linked (GlcNAc...) asparagine glycan is linked to N338. 5 consecutive transmembrane segments (helical) span residues 370–390 (IYAI…TYAG), 409–429 (LVTR…GGSS), 434–454 (LIII…FALI), 473–493 (IYII…NIYY), and 513–533 (VFIG…VIYL). Residues 551 to 581 (PQQQANMENGLGPEMERVPYREDLADIPLPE) form a disordered region. The segment covering 564–574 (EMERVPYREDL) has biased composition (basic and acidic residues).

It belongs to the NRAMP (TC 2.A.55) family.

It is found in the membrane. Its function is as follows. Probable divalent metal transporter. This Populus trichocarpa (Western balsam poplar) protein is Metal transporter Nramp7.1.